Here is a 238-residue protein sequence, read N- to C-terminus: Ribitol-5-phosphate cytidylyltransferase (238 aa).

CTP contacts are provided by residues 7–10 (LAGG) and 81–87 (GDDRNHS).

The protein belongs to the IspD/TarI cytidylyltransferase family. TarI subfamily.

The enzyme catalyses D-ribitol 5-phosphate + CTP + H(+) = CDP-L-ribitol + diphosphate. It participates in cell wall biogenesis; poly(ribitol phosphate) teichoic acid biosynthesis. Functionally, catalyzes the transfer of the cytidylyl group of CTP to D-ribitol 5-phosphate. This Staphylococcus epidermidis (strain ATCC 12228 / FDA PCI 1200) protein is Ribitol-5-phosphate cytidylyltransferase.